Reading from the N-terminus, the 125-residue chain is N-alpha-acetyltransferase 38, NatC auxiliary subunit (125 aa).

Residues 1-42 (MAGAGPTMLLREENGCCSRRQSSSSAGDSDGEQEDSPATRAR) are disordered. Ala-2 carries the N-acetylalanine modification. Residues 18-28 (SRRQSSSSAGD) show a composition bias toward low complexity. 3 positions are modified to phosphoserine: Ser-22, Ser-25, and Ser-29. Residues 40 to 118 (RARQQLEALL…IVSIEVQRES (79 aa)) enclose the Sm domain.

This sequence belongs to the snRNP Sm proteins family. As to quaternary structure, component of the N-terminal acetyltransferase C (NatC) complex, which is composed of NAA35, NAA38 and NAA30.

It localises to the cytoplasm. Its subcellular location is the nucleus. Functionally, auxillary component of the N-terminal acetyltransferase C (NatC) complex which catalyzes acetylation of N-terminal methionine residues. N-terminal acetylation protects proteins from ubiquitination and degradation by the N-end rule pathway. This chain is N-alpha-acetyltransferase 38, NatC auxiliary subunit (Naa38), found in Mus musculus (Mouse).